The primary structure comprises 418 residues: Protein FAM53A (418 aa).

Disordered regions lie at residues 198 to 236 and 248 to 269; these read TSPV…FNPR and ETGN…LSRR. Low complexity predominate over residues 205–229; the sequence is SSASSGFVDSSEGSTSSSTRWNSGG. A compositionally biased stretch (polar residues) spans 248-265; sequence ETGNLLPSANSTPTSTPE. The Nuclear localization signal signature appears at 285-293; that stretch reads KKSRLKRRR.

Belongs to the FAM53 family.

Its subcellular location is the nucleus. In terms of biological role, may play an important role in neural development; the dorsomedial roof of the third ventricle. This chain is Protein FAM53A, found in Gallus gallus (Chicken).